The following is a 508-amino-acid chain: MAASSSSSSSMASPRGRSIRETVLETVAAYHQQQRMRRKFRKSLSYAGELSSAGRARGEGGASSSASTTSLCGPDEDDEPFWEEEEGTVELVQLGANRAKNVLILMSDTGGGHRASAQAIKDPFRIEFGDDYRVFVKDLCKDHAGWPLNNMESSYKFMVKHVQLWKVAFHTTSPRWVHCFYLAALASFYAKKVEAGLKKYKPDIIISVHPLMQHIPLWVLKWQGLQNRVVFVTVITDLNTCHPTWFHADVNRCYCPSEEVAKRAALDDLQPSQIRVFGLPIRPSFCRAVLVKDDLRKELELDPELPAVLLMGGGEGMGPVKKTAKALGESLFDKELGKPIGQLIVICGRNKTLSSSLQALEWKIPIKVRGFETQMEKWMGACDCIITKAGPGTIAEALIRGLPIILNDFIPGQEVGNVPYVVDNGAGVFSKSSRETAKLVARWFGPDSDELKRMSEKALKLAQPEAVFDIVRDIHELSREQGVISQISSSLTSSFFIPSPETTPIQLM.

A chloroplast-targeting transit peptide spans 1–60; it reads MAASSSSSSSMASPRGRSIRETVLETVAAYHQQQRMRRKFRKSLSYAGELSSAGRARGEG. The tract at residues 51–79 is disordered; it reads SSAGRARGEGGASSSASTTSLCGPDEDDE.

This sequence belongs to the glycosyltransferase 28 family.

The protein resides in the plastid. The protein localises to the chloroplast membrane. It carries out the reaction a 1,2-diacyl-sn-glycerol + UDP-alpha-D-galactose = a 1,2-diacyl-3-O-(beta-D-galactosyl)-sn-glycerol + UDP + H(+). Functionally, involved in the synthesis of the major structural component of photosynthetic membranes. The sequence is that of Probable monogalactosyldiacylglycerol synthase 3, chloroplastic (MGD3) from Oryza sativa subsp. japonica (Rice).